Here is a 68-residue protein sequence, read N- to C-terminus: Large ribosomal subunit protein bL31 (68 aa).

Zn(2+)-binding residues include Cys-17, Cys-19, Cys-37, and Cys-40.

This sequence belongs to the bacterial ribosomal protein bL31 family. Type A subfamily. As to quaternary structure, part of the 50S ribosomal subunit. Zn(2+) is required as a cofactor.

Its function is as follows. Binds the 23S rRNA. This is Large ribosomal subunit protein bL31 from Dehalococcoides mccartyi (strain CBDB1).